The following is a 268-amino-acid chain: Enoyl-[acyl-carrier-protein] reductase [NADH] (268 aa).

Residues 20–21 (SI), 64–65 (DV), and 95–96 (IA) contribute to the NAD(+) site. Y157 is a substrate binding site. NAD(+) contacts are provided by K164 and I193.

Belongs to the short-chain dehydrogenases/reductases (SDR) family. FabI subfamily. Homodimer. Homotetramer.

It carries out the reaction a 2,3-saturated acyl-[ACP] + NAD(+) = a (2E)-enoyl-[ACP] + NADH + H(+). The catalysed reaction is a 2,3-saturated acyl-CoA + NAD(+) = a (2E)-enoyl-CoA + NADH + H(+). It functions in the pathway lipid metabolism; mycolic acid biosynthesis. Enoyl-ACP reductase of the type II fatty acid syntase (FAS-II) system, which is involved in the biosynthesis of mycolic acids, a major component of mycobacterial cell walls. Catalyzes the NADH-dependent reduction of the double bond of 2-trans-enoyl-[acyl-carrier protein], an essential step in the fatty acid elongation cycle of the FAS-II pathway. Shows preference for long-chain fatty acyl thioester substrates, and can also use 2-trans-enoyl-CoAs as alternative substrates. The mycobacterial FAS-II system utilizes the products of the FAS-I system as primers to extend fatty acyl chain lengths up to C56, forming the meromycolate chain that serves as the precursor for final mycolic acids. This Mycobacterium avium protein is Enoyl-[acyl-carrier-protein] reductase [NADH].